A 443-amino-acid polypeptide reads, in one-letter code: Carboxypeptidase M (443 aa).

The first 17 residues, 1 to 17 (MDFPCLWLGLLLPLVAA), serve as a signal peptide directing secretion. Residues 21 to 311 (NYHRQEGMEA…ASLIEYIKQV (291 aa)) enclose the Peptidase M14 domain. An N-linked (GlcNAc...) asparagine glycan is attached at Asn38. Residues His83 and Glu86 each contribute to the Zn(2+) site. Residues Asn115 and Asn164 are each glycosylated (N-linked (GlcNAc...) asparagine). 3 cysteine pairs are disulfide-bonded: Cys138–Cys285, Cys242–Cys284, and Cys341–Cys410. His190 lines the Zn(2+) pocket. Glu281 (proton donor/acceptor) is an active-site residue. 2 N-linked (GlcNAc...) asparagine glycosylation sites follow: Asn363 and Asn384. Ser423 carries the GPI-anchor amidated serine lipid modification. Residues 424–443 (AATKPSLFLFLVSLLHIFFK) constitute a propeptide, removed in mature form.

This sequence belongs to the peptidase M14 family. It depends on Zn(2+) as a cofactor.

Its subcellular location is the cell membrane. The enzyme catalyses Cleavage of C-terminal arginine or lysine residues from polypeptides.. Inhibited by O-phenanthroline and MGTA and activated by cobalt. Specifically removes C-terminal basic residues (Arg or Lys) from peptides and proteins. It is believed to play important roles in the control of peptide hormone and growth factor activity at the cell surface, and in the membrane-localized degradation of extracellular proteins. In Homo sapiens (Human), this protein is Carboxypeptidase M (CPM).